Here is a 489-residue protein sequence, read N- to C-terminus: DNA-directed RNA polymerase subunit beta' C-terminal section (489 aa).

Positions 208, 210, and 212 each coordinate Mg(2+).

It belongs to the RNA polymerase beta' chain family. RpoC1 subfamily. As to quaternary structure, in plastids the minimal PEP RNA polymerase catalytic core is composed of four subunits: alpha, beta, beta', and beta''. When a (nuclear-encoded) sigma factor is associated with the core the holoenzyme is formed, which can initiate transcription. Mg(2+) is required as a cofactor.

The protein localises to the plastid. It localises to the chloroplast. It catalyses the reaction RNA(n) + a ribonucleoside 5'-triphosphate = RNA(n+1) + diphosphate. In terms of biological role, DNA-dependent RNA polymerase catalyzes the transcription of DNA into RNA using the four ribonucleoside triphosphates as substrates. The polypeptide is DNA-directed RNA polymerase subunit beta' C-terminal section (rpoC1B) (Chlamydomonas reinhardtii (Chlamydomonas smithii)).